A 130-amino-acid polypeptide reads, in one-letter code: Small ribosomal subunit protein uS11c (130 aa).

It belongs to the universal ribosomal protein uS11 family. As to quaternary structure, part of the 30S ribosomal subunit.

The protein resides in the plastid. The protein localises to the chloroplast. This chain is Small ribosomal subunit protein uS11c, found in Angiopteris evecta (Mule's foot fern).